The sequence spans 761 residues: 1,4-alpha-glucan branching enzyme GlgB (761 aa).

D431 (nucleophile) is an active-site residue. E484 serves as the catalytic Proton donor.

It belongs to the glycosyl hydrolase 13 family. GlgB subfamily. In terms of assembly, monomer.

It carries out the reaction Transfers a segment of a (1-&gt;4)-alpha-D-glucan chain to a primary hydroxy group in a similar glucan chain.. It participates in glycan biosynthesis; glycogen biosynthesis. Its function is as follows. Catalyzes the formation of the alpha-1,6-glucosidic linkages in glycogen by scission of a 1,4-alpha-linked oligosaccharide from growing alpha-1,4-glucan chains and the subsequent attachment of the oligosaccharide to the alpha-1,6 position. This Synechococcus sp. (strain WH7803) protein is 1,4-alpha-glucan branching enzyme GlgB.